The chain runs to 149 residues: Ribonuclease H (149 aa).

Residues Met-1–Asp-145 form the RNase H type-1 domain. 4 residues coordinate Mg(2+): Asp-9, Glu-50, Asp-72, and Asp-137.

This sequence belongs to the RNase H family. As to quaternary structure, monomer. Requires Mg(2+) as cofactor.

Its subcellular location is the cytoplasm. It carries out the reaction Endonucleolytic cleavage to 5'-phosphomonoester.. Functionally, endonuclease that specifically degrades the RNA of RNA-DNA hybrids. This chain is Ribonuclease H, found in Clostridium botulinum (strain ATCC 19397 / Type A).